Consider the following 192-residue polypeptide: MKALIDAGVVKFGRFVLSSGIESPFYVDLRRALGHPDLVKWVVSGYLSALSRLKFDVLLGVATGGIPYASILGYLLQKPFGYVRAGAKGYGTMQAVEGADVAGLAAVVVDDVLTTGNSLINAIKAVREAGGEVVGALVFLDREQCGSQNVRRETGVEVFSVYKMRELLETLKPYIGEGHYRAAVEYLAKWSC.

Residues Arg-84, Lys-88, and 110–118 contribute to the 5-phospho-alpha-D-ribose 1-diphosphate site; that span reads DDVLTTGNS. Residues Thr-114 and Arg-142 each coordinate orotate.

It belongs to the purine/pyrimidine phosphoribosyltransferase family. PyrE subfamily. As to quaternary structure, homodimer. The cofactor is Mg(2+).

It catalyses the reaction orotidine 5'-phosphate + diphosphate = orotate + 5-phospho-alpha-D-ribose 1-diphosphate. The protein operates within pyrimidine metabolism; UMP biosynthesis via de novo pathway; UMP from orotate: step 1/2. Its function is as follows. Catalyzes the transfer of a ribosyl phosphate group from 5-phosphoribose 1-diphosphate to orotate, leading to the formation of orotidine monophosphate (OMP). This is Orotate phosphoribosyltransferase from Pyrobaculum calidifontis (strain DSM 21063 / JCM 11548 / VA1).